Consider the following 137-residue polypeptide: Small ribosomal subunit protein uS12 (137 aa).

The residue at position 102 (Asp102) is a 3-methylthioaspartic acid.

It belongs to the universal ribosomal protein uS12 family. Part of the 30S ribosomal subunit. Contacts proteins S8 and S17. May interact with IF1 in the 30S initiation complex.

With S4 and S5 plays an important role in translational accuracy. Its function is as follows. Interacts with and stabilizes bases of the 16S rRNA that are involved in tRNA selection in the A site and with the mRNA backbone. Located at the interface of the 30S and 50S subunits, it traverses the body of the 30S subunit contacting proteins on the other side and probably holding the rRNA structure together. The combined cluster of proteins S8, S12 and S17 appears to hold together the shoulder and platform of the 30S subunit. The protein is Small ribosomal subunit protein uS12 of Mycoplasmopsis agalactiae (strain NCTC 10123 / CIP 59.7 / PG2) (Mycoplasma agalactiae).